A 426-amino-acid polypeptide reads, in one-letter code: MLGPPRRGPAYKTKLCALWQRGNCNRDTCSFAHGHGDIRRPPSSRGAFTHHPGRRDYRAGDFRGRIDRRFSPRRRHSPGRESRGHRPLYDRRPSSRERDSSYSRSPSRKSERRHEKKTDDGETNSSRSLSLSDNNDEKKKDKFSSGDEKEDHEKQLKQIRLDMEALRDDKTQMEVILDEKIDEVRKISSKVNDLEVQLRREKDECHRMTSKMKKFIKAHARFLKAQEEVKRSQARFERLGDLLASDILKRGANEEGSSVNEDLNERSPNTAATKKRSIPYSTSEEAKAVKKRRERDSDTMTRSDKYRSDVTDFDKTSKGTEATKSLYLKKKLWEDEKSKLGANIFTEKVKGSPVRHVLPSTGMAAHAIDDLNEAIELEDRHESIDALLENDADDKTRSPAIPLQPPPVVQNAYEQYEGDDEEVDVE.

The C3H1-type zinc finger occupies 10–36 (AYKTKLCALWQRGNCNRDTCSFAHGHG). Disordered regions lie at residues 34–155 (GHGD…HEKQ), 253–317 (NEEG…DKTS), and 390–426 (NDAD…VDVE). Composition is skewed to basic and acidic residues over residues 54-70 (RRDY…DRRF), 78-101 (PGRE…RDSS), and 108-120 (RKSE…KTDD). Residues 124–133 (NSSRSLSLSD) show a composition bias toward low complexity. Residues 135 to 155 (NDEKKKDKFSSGDEKEDHEKQ) are compositionally biased toward basic and acidic residues. The stretch at 144–245 (SSGDEKEDHE…FERLGDLLAS (102 aa)) forms a coiled coil. Residues 255-272 (EGSSVNEDLNERSPNTAA) show a composition bias toward polar residues. The span at 284-317 (EEAKAVKKRRERDSDTMTRSDKYRSDVTDFDKTS) shows a compositional bias: basic and acidic residues. The segment covering 416–426 (YEGDDEEVDVE) has biased composition (acidic residues).

This chain is Zinc finger CCCH domain-containing protein 13, found in Oryza sativa subsp. japonica (Rice).